Reading from the N-terminus, the 198-residue chain is HTH-type transcriptional regulator BetI (198 aa).

One can recognise an HTH tetR-type domain in the interval Pro8–Leu68. Positions Thr31 to Phe50 form a DNA-binding region, H-T-H motif.

It participates in amine and polyamine biosynthesis; betaine biosynthesis via choline pathway [regulation]. Its function is as follows. Repressor involved in the biosynthesis of the osmoprotectant glycine betaine. It represses transcription of the choline transporter BetT and the genes of BetAB involved in the synthesis of glycine betaine. This is HTH-type transcriptional regulator BetI from Brucella canis (strain ATCC 23365 / NCTC 10854 / RM-666).